Consider the following 428-residue polypeptide: Elongation factor 1-alpha (428 aa).

The tr-type G domain maps to 5–225 (KPILNVAFIG…DAFQPPEKPT (221 aa)). The tract at residues 14-21 (GHVDAGKS) is G1. Position 14 to 21 (14 to 21 (GHVDAGKS)) interacts with GTP. A Mg(2+)-binding site is contributed by S21. The interval 70–74 (GVTID) is G2. Residues 91 to 94 (DCPG) are G3. GTP is bound by residues 91–95 (DCPGH) and 149–152 (NKMD). A G4 region spans residues 149–152 (NKMD). The G5 stretch occupies residues 189 to 191 (ASL).

Belongs to the TRAFAC class translation factor GTPase superfamily. Classic translation factor GTPase family. EF-Tu/EF-1A subfamily.

Its subcellular location is the cytoplasm. The catalysed reaction is GTP + H2O = GDP + phosphate + H(+). Its function is as follows. GTP hydrolase that promotes the GTP-dependent binding of aminoacyl-tRNA to the A-site of ribosomes during protein biosynthesis. In Methanococcus maripaludis (strain C6 / ATCC BAA-1332), this protein is Elongation factor 1-alpha.